A 749-amino-acid polypeptide reads, in one-letter code: RNA-binding protein 5-B (749 aa).

The disordered stretch occupies residues 1 to 88; sequence MGSDKRVSRS…YHSDGDYMDH (88 aa). The region spanning 102-182 is the RRM 1 domain; it reads KTIMLRGLPI…KTIAMHYSNP (81 aa). Residues 185–214 form a RanBP2-type zinc finger; that stretch reads KFEDWLCNKCGLYNFRRRLKCFRCGAAKAE. In terms of domain architecture, RRM 2 spans 241–325; that stretch reads SAIILRNIGP…KTIGVDFAKS (85 aa). Disordered regions lie at residues 425–471, 520–558, 570–595, and 626–680; these read QMYQ…SVPD, PAAD…AQQI, NKQK…ESAA, and TEEE…NSNI. Over residues 429–460 the composition is skewed to low complexity; sequence QPGSPTQSGTSTAASTTPASTTSTEEATTPTA. 2 stretches are compositionally biased toward basic and acidic residues: residues 585 to 594 and 627 to 648; these read SRDEERKESA and EEEK…EKYG. The 47-residue stretch at 677-723 folds into the G-patch domain; it reads NSNIGNKMLQAMGWKEGSGLGRKSQGITAPIQAQVRMRGAGLGAKGS.

Belongs to the RBM5/RBM10 family. Component of the spliceosome A complex (also known as the prespliceosome). Appears to dissociate from the spliceosome upon formation of the spliceosome B complex (also known as the precatalytic spliceosome), in which the heterotrimeric U4/U6.U5 snRNPs are bound.

The protein localises to the nucleus. Component of the spliceosome A complex. Regulates alternative splicing of a number of mRNAs. May modulate splice site pairing after recruitment of the U1 and U2 snRNPs to the 5' and 3' splice sites of the intron. This chain is RNA-binding protein 5-B (rbm5-b), found in Xenopus laevis (African clawed frog).